Consider the following 976-residue polypeptide: Mast/stem cell growth factor receptor kita (976 aa).

A signal peptide spans Met1–Ser21. Residues Arg22–Pro515 are Extracellular-facing. Ig-like C2-type domains are found at residues Pro23–Lys105, Ile100–Arg199, Pro206–Asn301, Ile308–His402, and Phe399–Ser504. 2 N-linked (GlcNAc...) asparagine glycosylation sites follow: Asn39 and Asn47. 4 cysteine pairs are disulfide-bonded: Cys44/Cys89, Cys131/Cys180, Cys146/Cys177, and Cys228/Cys285. N-linked (GlcNAc...) asparagine glycans are attached at residues Asn282, Asn309, Asn315, Asn352, Asn449, and Asn477. Cys422 and Cys488 are disulfide-bonded. Residues Leu516–Tyr536 traverse the membrane as a helical segment. The Cytoplasmic segment spans residues Lys537–Val976. Tyr559 contributes to the Mg(2+) binding site. Phosphotyrosine; by autocatalysis occurs at positions 559 and 561. Residues Leu580–Leu922 form the Protein kinase domain. Residues Gly587–Val594, Lys614, and Glu662–Asp668 each bind ATP. Phosphotyrosine; by autocatalysis occurs at positions 691 and 707. The active-site Proton acceptor is Asp777. Arg781 contacts ATP. 2 residues coordinate Mg(2+): Asn782 and Asp795. Tyr808 and Tyr921 each carry phosphotyrosine; by autocatalysis. A disordered region spans residues Pro929–Val976. A compositionally biased stretch (polar residues) spans Ser947–Val976.

Belongs to the protein kinase superfamily. Tyr protein kinase family. CSF-1/PDGF receptor subfamily. Post-translationally, ubiquitinated. Rapidly ubiquitinated after autophosphorylation induced by kitlg/scf binding, leading to internalization and degradation. In terms of processing, autophosphorylated on tyrosine residues. Phosphorylated tyrosine residues are important for interaction with specific binding partners. In terms of tissue distribution, expressed in cells of the neural crest-melanocyte lineage. In the embryo, also expressed in mesodermal cells that give rise to hematopoietic precursors, notochord, neural crest-derived cells of the branchial arches, pineal gland, retina and mechanoreceptive sensory cells of lateral line neuromasts. Not detected in primordial germ cells or larval gut.

The protein localises to the cell membrane. It carries out the reaction L-tyrosyl-[protein] + ATP = O-phospho-L-tyrosyl-[protein] + ADP + H(+). Its function is as follows. Tyrosine-protein kinase that acts as a cell-surface receptor for the cytokine kitlg/scf and plays a role in the regulation of cell survival and proliferation, hematopoiesis, stem cell maintenance, gametogenesis, and in mast cell development, migration and function. Required for the migration of cells in the melanocyte lineage and the survival of embryonic melanocytes. Required for the differentiation of some, but not all, melanocytes. Not essential for hematopoiesis or primordial germ cell development. The polypeptide is Mast/stem cell growth factor receptor kita (kita) (Danio rerio (Zebrafish)).